Consider the following 138-residue polypeptide: Basic phospholipase A2 homolog MjTX-I (138 aa).

An N-terminal signal peptide occupies residues 1–16 (MRTLWIMAVLLVGVEG). Residue Val34 coordinates suramin. Cystine bridges form between Cys42–Cys132, Cys44–Cys60, Cys59–Cys111, Cys65–Cys138, Cys66–Cys104, Cys73–Cys97, and Cys91–Cys102. Residue Asn43 participates in varespladib binding. Gly45 and Gly48 together coordinate suramin. Residues His63 and Lys64 each coordinate varespladib. Lys85 lines the suramin pocket.

This sequence belongs to the phospholipase A2 family. Group II subfamily. K49 sub-subfamily. In terms of assembly, monomer in solution. Homodimer; non-covalently linked (probable conventional/extended dimer conformation). Homotetramer (dimer of homodimer (probable conventional/extended dimer conformation)); non-covalently linked. Homooligomer. In terms of tissue distribution, expressed by the venom gland.

It localises to the secreted. Its activity is regulated as follows. Myotoxin activity is inhibited by suramin and varespladib. Inhibition by suramin may be caused by (i) distortion of MDiS from both monomers impairing the membrane disruption mechanism by the toxin and (ii) surface electrostatic changes of the complex that interfere with the toxin membrane dockage process (putative-MDoS is partially hidden). Inhibition by varespladib is probably through varespladib binding to MDoS. Functionally, snake venom phospholipase A2 homolog that lacks enzymatic activity. In vivo, it displays local myotoxin and edema-inducing activities and is lethal by intraperitoneal injection. The myotoxicity effect is weaker in comparison to other myotoxins, probably due to the formation of high molecular weight complexes and to the oligomeric conformation (conventional dimer). It shows specificity toward neurons and myotubes, but not on a variety of other cell types. This PLA2 excites a cohort of sensory neurons via ATP release and consequent activation of P2RX2 and/or P2RX3 purinergic receptors. Pannexin hemichannels act as downstream mediators of toxin-evoked ATP release. In vivo, it elicits nonneurogenic inflammatory pain, thermal hyperalgesia, and mechanical allodynia, of which the latter is completely dependent on purinergic signaling. This is Basic phospholipase A2 homolog MjTX-I from Bothrops moojeni (Lance-headed viper).